We begin with the raw amino-acid sequence, 1444 residues long: MDLARSDIIPHLLCLFQEIIQANIQKVSEAYDLELKIMNILTLWRNGSDNLISDNDDYMKKGLFFSRSNDPLALQARYARMYDDLFKLNNYEVPDDVVRRHDNKILDIILKESSVPFWYDISDDEAHESMLPEFRLQDIHEFRLNLKRVRVVPDESEEIQMDESQSDKRRRKKRMEKSRPVWLSGSESDRRIELNDSLKPSQKFETKLSSYLLNRLMNEMNPHYCGHPLPALFVTLIMLKAYSIKNKFFSYGIRYMELVCNEIAGPDLNTRTFPVLFGSDGSFVGTRVYSHYPIKLRMILNDLTYLLTYSDLHKFQEFELDVNDEVLLHMLRTPNDGRQLKKAVTRLNHYYGLKFNPKTTDCGVVNGMDFTHKHPITKTADFTSPVLPMTNSFNKAEICYGHNSKILNRAVFTDTVRGHIREDLKNVADLDLPKLYEHVSKLVDMRVNYTIIYDLMFLRVMLNLGGYSRSNQITDFRKTIDEITKMNEGFLSGADPEKNIDTLNAWMAPTMEDCGYRLTKSILFGKFRKAKYPSDLEAKSNIDYYVTARSAGIGNLRISIETDKRKYKVRTTSKSAFVNAMGSGILDVNPVSNEPMMLTDYLLTQTPETRANLEAAIDSGSKSDSELMRILGQNSIGSRSTTAWRPVRPIYINVLQAHLAQAFIIGPHINATVNQHEYQPTSLWFTGDDLGVGFATLYQSGTADIIVPAIEASSTGKALSVLADCSSWDQTYLTATMIPYYNGIKRALLEYQQADMRNFYMIDSGRTGVPGMKLSEIVDWFNSFQTKRIFNASYLKERHSFVVKYMWSGRLDTFFMNSVQNALITRRIAEEVSLRVSNTGLSWFQVAGDDAIMVYDGSSISTTEQVTRINEITVRNYEESNHIINPQKTVISHISGEYAKIYYYAGMHFRDPSIQLHESEKDSGASDVTESLREFGQVIYEYNKRAIGTLRVNALYGRLIAGLAYSVNCPQYDASKRTYANMKYYPPPTSVIAPAAFKGGLGLSFTGLSLNEVLFIKLHLHEAVSQGLHVISMISFEANEVVSNSLSAYYLKDQKDLLRDMKLGKHLEKVKGISFKSSDLAFSGSDFSQGLNLKRESIDKVKLEVSRKSIRDLRSSGISVPSTHAYENLPYASLHQSFKSLKVDRDTSKFTNERLLVSLLEYKSDIPRVSVTSQYPVYDLINISKVDELNVRSGGPVRFISAPIEGKLLEENIGTRQGVQFKNRGYGGSQEVLHFIRSNGLVITEQALIDLIIKSGVLLMINPQRGLIDLFQSLSGDTASSMHLANFFMAEKPHWEDNAISLTIAGSLLENCDSRIENVKNFVSVLATGMQKDLQRMFYYVGFVYYAQRLIWSGGHSSKIFVSIDEDKLADFLRGSKPITRRRKAMAGTKREPINLSANFSYEISEPDREISEYDPLILCHPLSMPFFGNWQEKYSVMQSDEQM.

A disordered region spans residues 156–182 (SEEIQMDESQSDKRRRKKRMEKSRPVW). Positions 690–897 (LGVGFATLYQ…KTVISHISGE (208 aa)) constitute a RdRp catalytic domain.

This sequence belongs to the reoviridae RNA-directed RNA polymerase family.

It is found in the virion. The protein resides in the host cytoplasm. The enzyme catalyses RNA(n) + a ribonucleoside 5'-triphosphate = RNA(n+1) + diphosphate. RNA-directed RNA polymerase that is involved in both transcription and genome replication. Together with the capping enzyme P5 and protein P7, forms an enzyme complex positioned near the channels situated at each of the five-fold vertices of the core. The chain is RNA-directed RNA polymerase P1 (S1) from Rice dwarf virus (isolate Fujian) (RDV).